A 90-amino-acid chain; its full sequence is uncharacterized protein (90 aa).

Residues 1 to 26 are disordered; that stretch reads MFKRSVSRLFCAPAPAPAPRKQPGGR. Residues 33–66 are a coiled coil; sequence NLNQSVKKQLNHLEVLERIKKQRKEQKNNRNQVD.

This is an uncharacterized protein from Dictyostelium discoideum (Social amoeba).